An 865-amino-acid chain; its full sequence is DNA topoisomerase 1 (865 aa).

In terms of domain architecture, Toprim spans 3-142; that stretch reads KALVIVESPA…RYSRVVFNEI (140 aa). Glu-9 lines the Mg(2+) pocket. The interval 37 to 65 is disordered; sequence LPTSGSAAKKSADSTSTKTAKKPKKDERG. The span at 39–54 shows a compositional bias: low complexity; sequence TSGSAAKKSADSTSTK. Residue Asp-111 coordinates Mg(2+). The 418-residue stretch at 158–575 folds into the Topo IA-type catalytic domain; it reads NINRVNAQQA…NFFSDFTQQL (418 aa). Positions 192-197 are interaction with DNA; sequence SAGRVQ. Catalysis depends on Tyr-319, which acts as the O-(5'-phospho-DNA)-tyrosine intermediate. C4-type zinc fingers lie at residues 599-630, 662-689, and 711-736; these read CPTC…KERC, CQKC…NPTC, and CEKC…NDEC.

Belongs to the type IA topoisomerase family. As to quaternary structure, monomer. Mg(2+) is required as a cofactor.

It carries out the reaction ATP-independent breakage of single-stranded DNA, followed by passage and rejoining.. In terms of biological role, releases the supercoiling and torsional tension of DNA, which is introduced during the DNA replication and transcription, by transiently cleaving and rejoining one strand of the DNA duplex. Introduces a single-strand break via transesterification at a target site in duplex DNA. The scissile phosphodiester is attacked by the catalytic tyrosine of the enzyme, resulting in the formation of a DNA-(5'-phosphotyrosyl)-enzyme intermediate and the expulsion of a 3'-OH DNA strand. The free DNA strand then undergoes passage around the unbroken strand, thus removing DNA supercoils. Finally, in the religation step, the DNA 3'-OH attacks the covalent intermediate to expel the active-site tyrosine and restore the DNA phosphodiester backbone. This chain is DNA topoisomerase 1, found in Salmonella typhimurium (strain LT2 / SGSC1412 / ATCC 700720).